A 188-amino-acid chain; its full sequence is Augmin complex subunit dgt4 (188 aa).

Positions 141-163 form a coiled coil; that stretch reads QREFAQNQEALRSLRTAVDGLEN.

As to quaternary structure, component of the augmin complex composed of dgt2, dgt3, dgt4, dgt5, dgt6, msd1, msd5 and wac. The complex interacts directly or indirectly with microtubules and is required for centrosome-independent generation of spindle microtubules.

It is found in the cytoplasm. The protein resides in the cytoskeleton. It localises to the spindle. In terms of biological role, as part of the augmin complex, plays a role in centrosome-independent generation of spindle microtubules. The complex is required for mitotic spindle assembly through its involvement in localizing gamma-tubulin to spindle microtubules. The chain is Augmin complex subunit dgt4 from Drosophila melanogaster (Fruit fly).